The primary structure comprises 352 residues: Histidine biosynthesis bifunctional protein HisB (352 aa).

A histidinol-phosphatase region spans residues 1–163 (MKKILFIDRD…MVASAIINDA (163 aa)). The Nucleophile role is filled by aspartate 8. Residues aspartate 8 and aspartate 10 each contribute to the Mg(2+) site. Aspartate 10 serves as the catalytic Proton donor. Residues cysteine 91, histidine 93, cysteine 99, and cysteine 101 each coordinate Zn(2+). Aspartate 128 lines the Mg(2+) pocket. An imidazoleglycerol-phosphate dehydratase region spans residues 164–352 (RKASVQRKTK…NYLPSTKGVL (189 aa)).

The protein in the N-terminal section; belongs to the histidinol-phosphatase family. It in the C-terminal section; belongs to the imidazoleglycerol-phosphate dehydratase family. It depends on Mg(2+) as a cofactor. Zn(2+) is required as a cofactor.

It localises to the cytoplasm. It catalyses the reaction D-erythro-1-(imidazol-4-yl)glycerol 3-phosphate = 3-(imidazol-4-yl)-2-oxopropyl phosphate + H2O. It carries out the reaction L-histidinol phosphate + H2O = L-histidinol + phosphate. It functions in the pathway amino-acid biosynthesis; L-histidine biosynthesis; L-histidine from 5-phospho-alpha-D-ribose 1-diphosphate: step 6/9. The protein operates within amino-acid biosynthesis; L-histidine biosynthesis; L-histidine from 5-phospho-alpha-D-ribose 1-diphosphate: step 8/9. The sequence is that of Histidine biosynthesis bifunctional protein HisB from Legionella pneumophila (strain Lens).